The sequence spans 762 residues: Putative cation exchanger YDL206W (762 aa).

A signal peptide spans 1–26 (MHKPLRWLITIAFYVSNVILIGYSLS). Topologically, residues 27 to 30 (SNGS) are extracellular. An N-linked (GlcNAc...) asparagine glycan is attached at asparagine 28. Residues 31–51 (ISEFYLHSVVLIECFSLLGVV) traverse the membrane as a helical segment. Over 52–102 (TSDCLTPSLSYISSNIFHISDRVSGMTLLALGNALPDITSTYQSMKSGVTS) the chain is Cytoplasmic. A helical transmembrane segment spans residues 103–123 (LAIGELFGGIFFLLTVVIGLM). At 124–156 (GCVATIQFQHDKSIETYTEESFDQNLSYDRSNY) the chain is on the extracellular side. A glycan (N-linked (GlcNAc...) asparagine) is linked at asparagine 148. A helical membrane pass occupies residues 157–177 (ILDVGIFTFMLLVSGTFLADG). Arginine 178 is a topological domain (cytoplasmic). The helical transmembrane segment at 179–199 (LYFWECIVMVLTYCCCAVYLI) threads the bilayer. Residues 200 to 501 (KSYKYPCEIN…YNYLTDVSLE (302 aa)) are Extracellular-facing. Asparagine 280 and asparagine 329 each carry an N-linked (GlcNAc...) asparagine glycan. The chain crosses the membrane as a helical span at residues 502-522 (IGFFEFLSLLVTTPVSIILYL). At 523-554 (SIPSEISQTDHDLPLSYLQNIQLIASPIILNQ) the chain is on the cytoplasmic side. A helical membrane pass occupies residues 555–575 (LITNNFSFWLLILSLVIAILL). The Extracellular portion of the chain corresponds to 576-589 (YFKTRTIPNKFNSD). The helical transmembrane segment at 590-610 (IIFTVAFLLSLACLSKAVHII) threads the bilayer. Residues 611–615 (VVTLT) lie on the Cytoplasmic side of the membrane. A helical membrane pass occupies residues 616–636 (HWINVFNISETILGLTIFTWG). Residues 637–650 (NSIGDLVSNITFVK) lie on the Extracellular side of the membrane. An N-linked (GlcNAc...) asparagine glycan is attached at asparagine 645. The chain crosses the membrane as a helical span at residues 651–671 (IGVLEIAIGACFGSPLLYFLF). At 672-709 (GVGFDGIMIMLGDKTGKIVSGRDSNILMHHIDFKVDKN) the chain is on the cytoplasmic side. Residues 710–730 (LINTGVGILIAFLIFTVLIPL) traverse the membrane as a helical segment. Residues 731–738 (NDWKIDKK) are Extracellular-facing. Residues 739-759 (ISIALLTLYIVVTCISVFLEV) traverse the membrane as a helical segment. Residues 760–762 (HQV) are Cytoplasmic-facing.

It belongs to the Ca(2+):cation antiporter (CaCA) (TC 2.A.19) family.

The protein resides in the membrane. Putative cation exchanger. The chain is Putative cation exchanger YDL206W from Saccharomyces cerevisiae (strain ATCC 204508 / S288c) (Baker's yeast).